A 179-amino-acid polypeptide reads, in one-letter code: Small heat shock protein hspK (179 aa).

Residues 32-178 (HRINIWRPTV…DRLKIPIQSK (147 aa)) enclose the sHSP domain. A disordered region spans residues 80-122 (KKSKGGLNNLPSSSSSINSDSTTNTNTNTTTTTTTAPPPPSDA). A compositionally biased stretch (low complexity) spans 87–114 (NNLPSSSSSINSDSTTNTNTNTTTTTTT).

It belongs to the small heat shock protein (HSP20) family.

This chain is Small heat shock protein hspK (hspK), found in Dictyostelium discoideum (Social amoeba).